The sequence spans 377 residues: Queuine tRNA-ribosyltransferase (377 aa).

D89 functions as the Proton acceptor in the catalytic mechanism. Residues 89-93, D143, Q187, and G214 contribute to the substrate site; that span reads DSGGF. Residues 245–251 are RNA binding; sequence GVGKPED. D264 functions as the Nucleophile in the catalytic mechanism. The RNA binding; important for wobble base 34 recognition stretch occupies residues 269–273; it reads TRNAR. Residues C302, C304, C307, and H333 each coordinate Zn(2+).

The protein belongs to the queuine tRNA-ribosyltransferase family. As to quaternary structure, homodimer. Within each dimer, one monomer is responsible for RNA recognition and catalysis, while the other monomer binds to the replacement base PreQ1. Zn(2+) is required as a cofactor.

The enzyme catalyses 7-aminomethyl-7-carbaguanine + guanosine(34) in tRNA = 7-aminomethyl-7-carbaguanosine(34) in tRNA + guanine. It participates in tRNA modification; tRNA-queuosine biosynthesis. Functionally, catalyzes the base-exchange of a guanine (G) residue with the queuine precursor 7-aminomethyl-7-deazaguanine (PreQ1) at position 34 (anticodon wobble position) in tRNAs with GU(N) anticodons (tRNA-Asp, -Asn, -His and -Tyr). Catalysis occurs through a double-displacement mechanism. The nucleophile active site attacks the C1' of nucleotide 34 to detach the guanine base from the RNA, forming a covalent enzyme-RNA intermediate. The proton acceptor active site deprotonates the incoming PreQ1, allowing a nucleophilic attack on the C1' of the ribose to form the product. After dissociation, two additional enzymatic reactions on the tRNA convert PreQ1 to queuine (Q), resulting in the hypermodified nucleoside queuosine (7-(((4,5-cis-dihydroxy-2-cyclopenten-1-yl)amino)methyl)-7-deazaguanosine). The sequence is that of Queuine tRNA-ribosyltransferase from Shewanella denitrificans (strain OS217 / ATCC BAA-1090 / DSM 15013).